Here is a 1381-residue protein sequence, read N- to C-terminus: Hepatocyte growth factor receptor (1381 aa).

A signal peptide spans 1-24; the sequence is MKAPTVLAPGILVLLFTLVQKSNG. Residues 25–933 are Extracellular-facing; that stretch reads ECREALAKSE…VIVQSDQSFT (909 aa). In terms of domain architecture, Sema spans 27–516; sequence REALAKSEMN…TGKKITRIPL (490 aa). Residues N45, N100, and N106 are each glycosylated (N-linked (GlcNAc...) asparagine). Intrachain disulfides connect C95–C101, C98–C160, C133–C141, and C173–C176. 2 N-linked (GlcNAc...) asparagine glycosylation sites follow: N203 and N359. Cystine bridges form between C299-C364 and C386-C398. 2 N-linked (GlcNAc...) asparagine glycosylation sites follow: N400 and N406. 4 disulfides stabilise this stretch: C521–C539, C527–C562, C530–C546, and C542–C552. N554 is a glycosylation site (N-linked (GlcNAc...) asparagine). 3 IPT/TIG domains span residues 564 to 656, 658 to 740, and 743 to 837; these read PTVY…FSYV, PIIT…FSYR, and PIVY…LIYV. T583 carries an O-linked (Man) threonine glycan. N-linked (GlcNAc...) asparagine glycans are attached at residues N608 and N636. Residues T677 and T762 are each glycosylated (O-linked (Man) threonine). 2 N-linked (GlcNAc...) asparagine glycosylation sites follow: N786 and N880. A helical transmembrane segment spans residues 934-956; that stretch reads GVIVGVVAISIILLLLLGLFLWL. Over 957–1381 the chain is Cytoplasmic; sequence KKKKQIKDLG…QDDLDGEVDT (425 aa). Position 967 is a phosphoserine (S967). The residue at position 978 (T978) is a Phosphothreonine. Residues S991, S998, and S1001 each carry the phosphoserine modification. A Phosphotyrosine modification is found at Y1004. The region spanning 1079–1346 is the Protein kinase domain; that stretch reads VHFNEVIGRG…RISAIFSTFI (268 aa). Residues 1085–1093 and K1111 contribute to the ATP site; that span reads IGRGHFGCV. The active-site Proton acceptor is D1205. The interval 1213-1381 is interaction with RANBP9; the sequence is LDEKFTVKVA…QDDLDGEVDT (169 aa). The residue at position 1231 (Y1231) is a Phosphotyrosine. Phosphotyrosine; by autocatalysis occurs at positions 1235 and 1236. At T1290 the chain carries Phosphothreonine. The tract at residues 1321-1360 is interaction with MUC20; sequence WHPKAEMRPSFSELVSRISAIFSTFIGEHYVHVNATYVNV. Phosphotyrosine; by autocatalysis occurs at positions 1350 and 1357. Residue Y1366 is modified to Phosphotyrosine.

It belongs to the protein kinase superfamily. Tyr protein kinase family. As to quaternary structure, heterodimer made of an alpha chain (50 kDa) and a beta chain (145 kDa) which are disulfide linked. Binds PLXNB1. Interacts when phosphorylated with downstream effectors including STAT3, PIK3R1, SRC, PCLG1, GRB2 and GAB1. Interacts with SPSB1, SPSB2 and SPSB4. Interacts with INPP5D/SHIP1. When phosphorylated at Tyr-1357, interacts with INPPL1/SHIP2. Interacts with RANBP9 and RANBP10, as well as SPSB1, SPSB2, SPSB3 and SPSB4. SPSB1 binding occurs in the presence and in the absence of HGF, however HGF treatment has a positive effect on this interaction. Interacts with MUC20; prevents interaction with GRB2 and suppresses hepatocyte growth factor-induced cell proliferation. Interacts with GRB10. Interacts with PTPN1 and PTPN2. Interacts with HSP90AA1 and HSP90AB1; the interaction suppresses MET kinase activity. Interacts with tensin TNS3. Interacts (when phosphorylated) with tensin TNS4 (via SH2 domain); the interaction increases MET protein stability by inhibiting MET endocytosis and subsequent lysosomal degradation. In terms of processing, autophosphorylated in response to ligand binding on Tyr-1235 and Tyr-1236 in the kinase domain leading to further phosphorylation of Tyr-1350 and Tyr-1357 in the C-terminal multifunctional docking site. Dephosphorylated by PTPRJ at Tyr-1350 and Tyr-1366. Dephosphorylated by PTPN1 and PTPN2. Ubiquitinated. Ubiquitination by CBL regulates the receptor stability and activity through proteasomal degradation. Post-translationally, O-mannosylation of IPT/TIG domains by TMEM260 is required for protein maturation. O-mannosylated residues are composed of single mannose glycans that are not elongated or modified.

The protein localises to the membrane. It carries out the reaction L-tyrosyl-[protein] + ATP = O-phospho-L-tyrosyl-[protein] + ADP + H(+). In its inactive state, the C-terminal tail interacts with the catalytic domain and inhibits the kinase activity. Upon ligand binding, the C-terminal tail is displaced and becomes phosphorylated, thus increasing the kinase activity. Its function is as follows. Receptor tyrosine kinase that transduces signals from the extracellular matrix into the cytoplasm by binding to hepatocyte growth factor/HGF ligand. Regulates many physiological processes including proliferation, scattering, morphogenesis and survival. Ligand binding at the cell surface induces autophosphorylation of MET on its intracellular domain that provides docking sites for downstream signaling molecules. Following activation by ligand, interacts with the PI3-kinase subunit PIK3R1, PLCG1, SRC, GRB2, STAT3 or the adapter GAB1. Recruitment of these downstream effectors by MET leads to the activation of several signaling cascades including the RAS-ERK, PI3 kinase-AKT, or PLCgamma-PKC. The RAS-ERK activation is associated with the morphogenetic effects while PI3K/AKT coordinates prosurvival effects. During embryonic development, MET signaling plays a role in gastrulation, development and migration of muscles and neuronal precursors, angiogenesis and kidney formation. In adults, participates in wound healing as well as organ regeneration and tissue remodeling. Also promotes differentiation and proliferation of hematopoietic cells. The chain is Hepatocyte growth factor receptor (MET) from Dasypus novemcinctus (Nine-banded armadillo).